A 3206-amino-acid polypeptide reads, in one-letter code: Highly reducing polyketide synthase ltbA (3206 aa).

The region spanning 5–434 is the Ketosynthase family 3 (KS3) domain; it reads PAPIAIIGVG…GTNCHVILEA (430 aa). Residues Cys179, His314, and His354 each act as for beta-ketoacyl synthase activity in the active site. Residues 441-463 show a composition bias toward polar residues; it reads PTGTNGIKTNGTRINGIKTNGAD. Positions 441–472 are disordered; that stretch reads PTGTNGIKTNGTRINGIKTNGADTNERESMKN. A malonyl-CoA:ACP transacylase (MAT) domain region spans residues 575–890; the sequence is VFSGQGAQWH…EYLSALQRNT (316 aa). Residues 958–1098 form an N-terminal hotdog fold region; that stretch reads HDLLGLFDPA…GEITVEYETD (141 aa). The tract at residues 958–1278 is dehydratase (DH) domain; the sequence is HDLLGLFDPA…LLVNLRAIGE (321 aa). One can recognise a PKS/mFAS DH domain in the interval 958–1284; it reads HDLLGLFDPA…AIGETREDED (327 aa). His990 functions as the Proton acceptor; for dehydratase activity in the catalytic mechanism. The tract at residues 1128-1284 is C-terminal hotdog fold; it reads DTDMTKSEFY…AIGETREDED (157 aa). Asp1193 serves as the catalytic Proton donor; for dehydratase activity. Residues 1450 to 1640 are methyltransferase (CMet) domain; the sequence is ESGILVGPYE…LARNGFGGIH (191 aa). The segment at 1871–2185 is enoyl reductase (ER) domain; that stretch reads LLSSLRFVDD…RKHTGKVVLQ (315 aa). The tract at residues 2208 to 2395 is ketoreductase (KR) domain; it reads GTYVAAGGLG…SVDAHGALKE (188 aa). In terms of domain architecture, Carrier spans 2499 to 2577; the sequence is EEAEQLIRDA…ALAATVASRS (79 aa). Ser2537 carries the O-(pantetheine 4'-phosphoryl)serine modification. A disordered region spans residues 2584 to 2611; the sequence is IRHSSRLQEATTQAENKDAPKNEKEGPS. The span at 2598-2610 shows a compositional bias: basic and acidic residues; sequence ENKDAPKNEKEGP. The tract at residues 2994–3206 is carnitine O-acyltransferase (cAT) domain; the sequence is HLIPSFGKAV…IKTIIQAGQE (213 aa).

The cofactor is pantetheine 4'-phosphate.

It participates in secondary metabolite biosynthesis. In terms of biological role, highly reducing polyketide synthase; part of the gene cluster that mediates the biosynthesis of luteodienoside A, a glycosylated polyketide consisting of an unusual 1-O-beta-D-glucopyranosyl-myo-inositol (glucinol) ester of 3-hydroxy-2,2,4-trimethylocta-4,6-dienoic acid. LtbA produces the trimethylated polyketide chain from acetyl-CoA, malonyl-CoA and S-adenosylmethionine (SAM). The ltbA carnitine O-acyltransferase (cAT) domain then uses glucinol produced by the glycosyltransferase ltbB as an offloading substrate to release luteodienoside A. Furthermore, the PKS C-methyltransferase (CMeT) domain is capable of catalysing gem-dimethylation of the 3-hydroxy-2,2,4-trimethylocta-4,6-dienoic acid intermediate, without requiring reversible product release and recapture by the cAT domain. Since ltbA and ltbB are sufficient for the biosynthesis of luteodienoside A, the functions of the methyltransferase ltbC and the FAD-binding monooxygenase ltbD within the pathway remain obscur. The protein is Highly reducing polyketide synthase ltbA of Aspergillus luteorubrus.